Consider the following 218-residue polypeptide: Thiamine-phosphate synthase (218 aa).

4-amino-2-methyl-5-(diphosphooxymethyl)pyrimidine is bound by residues 43–47 and Asn-75; that span reads QLRMK. Mg(2+) contacts are provided by Asp-76 and Asp-95. Residue Thr-114 participates in 4-amino-2-methyl-5-(diphosphooxymethyl)pyrimidine binding. 140 to 142 provides a ligand contact to 2-[(2R,5Z)-2-carboxy-4-methylthiazol-5(2H)-ylidene]ethyl phosphate; sequence TST. 4-amino-2-methyl-5-(diphosphooxymethyl)pyrimidine is bound at residue Lys-143. Residues Gly-171 and 191 to 192 each bind 2-[(2R,5Z)-2-carboxy-4-methylthiazol-5(2H)-ylidene]ethyl phosphate; that span reads VS.

It belongs to the thiamine-phosphate synthase family. Mg(2+) is required as a cofactor.

The catalysed reaction is 2-[(2R,5Z)-2-carboxy-4-methylthiazol-5(2H)-ylidene]ethyl phosphate + 4-amino-2-methyl-5-(diphosphooxymethyl)pyrimidine + 2 H(+) = thiamine phosphate + CO2 + diphosphate. It catalyses the reaction 2-(2-carboxy-4-methylthiazol-5-yl)ethyl phosphate + 4-amino-2-methyl-5-(diphosphooxymethyl)pyrimidine + 2 H(+) = thiamine phosphate + CO2 + diphosphate. It carries out the reaction 4-methyl-5-(2-phosphooxyethyl)-thiazole + 4-amino-2-methyl-5-(diphosphooxymethyl)pyrimidine + H(+) = thiamine phosphate + diphosphate. It functions in the pathway cofactor biosynthesis; thiamine diphosphate biosynthesis; thiamine phosphate from 4-amino-2-methyl-5-diphosphomethylpyrimidine and 4-methyl-5-(2-phosphoethyl)-thiazole: step 1/1. Functionally, condenses 4-methyl-5-(beta-hydroxyethyl)thiazole monophosphate (THZ-P) and 2-methyl-4-amino-5-hydroxymethyl pyrimidine pyrophosphate (HMP-PP) to form thiamine monophosphate (TMP). The protein is Thiamine-phosphate synthase of Myxococcus xanthus (strain DK1622).